A 211-amino-acid polypeptide reads, in one-letter code: Arginine exporter protein ArgO (211 aa).

A run of 6 helical transmembrane segments spans residues 1-21 (MFTY…PLGP), 37-57 (LMIA…GIFG), 68-88 (LLAL…FGAL), 111-131 (IIIT…DTFV), 147-167 (WFAL…ALLA), and 179-199 (AQRI…FQLA).

The protein belongs to the LysE/ArgO transporter (TC 2.A.75) family.

The protein localises to the cell inner membrane. It catalyses the reaction L-arginine(in) = L-arginine(out). Functionally, involved in the export of arginine. Important to control the intracellular level of arginine and the correct balance between arginine and lysine. This chain is Arginine exporter protein ArgO, found in Klebsiella pneumoniae subsp. pneumoniae (strain ATCC 700721 / MGH 78578).